Consider the following 626-residue polypeptide: (+)-3-carene synthase 2, chloroplastic (626 aa).

The N-terminal 45 residues, 1 to 45, are a transit peptide targeting the chloroplast; that stretch reads MSLISAVPLASSCVSKSLISSVREHTALRRAIATLQMSRRGKSVA. Residues D377, D381, and D529 each contribute to the Mg(2+) site. The DDXXD motif signature appears at 377–381; sequence DDMYD.

It belongs to the terpene synthase family. Tpsd subfamily. Mg(2+) serves as cofactor. Mn(2+) is required as a cofactor.

Its subcellular location is the plastid. The protein resides in the chloroplast. It catalyses the reaction (2E)-geranyl diphosphate = (+)-car-3-ene + diphosphate. Its pathway is terpene metabolism; oleoresin biosynthesis. It functions in the pathway secondary metabolite biosynthesis; terpenoid biosynthesis. Its function is as follows. Monoterpene synthase (TPS) involved in the biosynthesis of monoterpene natural products included in conifer oleoresin secretions and volatile emissions; these compounds contribute to biotic and abiotic stress defense against herbivores and pathogens. Catalyzes the conversion of (2E)-geranyl diphosphate (GPP) to (+)-3-carene. This Pinus banksiana (Jack pine) protein is (+)-3-carene synthase 2, chloroplastic.